A 138-amino-acid polypeptide reads, in one-letter code: Ribulose bisphosphate carboxylase small subunit (138 aa).

It belongs to the RuBisCO small chain family. Heterohexadecamer of 8 large and 8 small subunits.

The protein resides in the plastid. Its subcellular location is the chloroplast. Its function is as follows. RuBisCO catalyzes two reactions: the carboxylation of D-ribulose 1,5-bisphosphate, the primary event in carbon dioxide fixation, as well as the oxidative fragmentation of the pentose substrate in the photorespiration process. Both reactions occur simultaneously and in competition at the same active site. Although the small subunit is not catalytic it is essential for maximal activity. The protein is Ribulose bisphosphate carboxylase small subunit of Pyropia yezoensis (Susabi-nori).